Consider the following 488-residue polypeptide: 3-octaprenyl-4-hydroxybenzoate carboxy-lyase (488 aa).

Position 172 (asparagine 172) interacts with Mn(2+). Prenylated FMN is bound by residues isoleucine 175–arginine 177, arginine 189–leucine 191, and arginine 194–glycine 195. Glutamate 238 contacts Mn(2+). Residue aspartate 287 is the Proton donor of the active site.

This sequence belongs to the UbiD family. As to quaternary structure, homohexamer. It depends on prenylated FMN as a cofactor. Mn(2+) serves as cofactor.

The protein resides in the cell membrane. The enzyme catalyses a 4-hydroxy-3-(all-trans-polyprenyl)benzoate + H(+) = a 2-(all-trans-polyprenyl)phenol + CO2. The protein operates within cofactor biosynthesis; ubiquinone biosynthesis. Functionally, catalyzes the decarboxylation of 3-octaprenyl-4-hydroxy benzoate to 2-octaprenylphenol, an intermediate step in ubiquinone biosynthesis. This chain is 3-octaprenyl-4-hydroxybenzoate carboxy-lyase, found in Pseudomonas fluorescens (strain Pf0-1).